Here is a 614-residue protein sequence, read N- to C-terminus: ATP-dependent zinc metalloprotease FtsH (614 aa).

Residues 1–5 (MLPIR) are Cytoplasmic-facing. The helical transmembrane segment at 6–26 (WFLALLAVFLAVAGLDLWFSQ) threads the bilayer. Residues 27-127 (TGARPSSATG…AVSARERTAS (101 aa)) lie on the Periplasmic side of the membrane. A helical membrane pass occupies residues 128–148 (IVHAIVHPLGLITLIVGILFV). At 149 to 614 (VQRYAGRFTA…AQHPPSALAG (466 aa)) the chain is on the cytoplasmic side. 214–221 (GPPGTGKT) is an ATP binding site. Zn(2+) is bound at residue His-436. Glu-437 is a catalytic residue. Residues His-440 and Asp-513 each coordinate Zn(2+).

The protein in the central section; belongs to the AAA ATPase family. This sequence in the C-terminal section; belongs to the peptidase M41 family. As to quaternary structure, homohexamer. Zn(2+) is required as a cofactor.

The protein localises to the cell inner membrane. Acts as a processive, ATP-dependent zinc metallopeptidase for both cytoplasmic and membrane proteins. Plays a role in the quality control of integral membrane proteins. The chain is ATP-dependent zinc metalloprotease FtsH from Opitutus terrae (strain DSM 11246 / JCM 15787 / PB90-1).